The sequence spans 381 residues: Putative MgpC-like protein MPN_503 (381 aa).

Residues 1-109 (MNGVAQDKVH…TDSQQSGHNS (109 aa)) are disordered. A compositionally biased stretch (polar residues) spans 13–31 (EQTTQWNQQASQKNLTNNP). Basic and acidic residues-rich tracts occupy residues 40 to 51 (KLDKGRAYRKLN) and 61 to 73 (DSTK…DKDG). The span at 89–109 (VSSTESQMAAVTDSQQSGHNS) shows a compositional bias: polar residues.

Belongs to the MgpC family.

This is Putative MgpC-like protein MPN_503 from Mycoplasma pneumoniae (strain ATCC 29342 / M129 / Subtype 1) (Mycoplasmoides pneumoniae).